The primary structure comprises 90 residues: NAD(P)H-quinone oxidoreductase subunit H, chloroplastic (90 aa).

Belongs to the complex I 49 kDa subunit family. As to quaternary structure, NDH is composed of at least 16 different subunits, 5 of which are encoded in the nucleus.

It localises to the plastid. It is found in the chloroplast thylakoid membrane. It carries out the reaction a plastoquinone + NADH + (n+1) H(+)(in) = a plastoquinol + NAD(+) + n H(+)(out). It catalyses the reaction a plastoquinone + NADPH + (n+1) H(+)(in) = a plastoquinol + NADP(+) + n H(+)(out). In terms of biological role, NDH shuttles electrons from NAD(P)H:plastoquinone, via FMN and iron-sulfur (Fe-S) centers, to quinones in the photosynthetic chain and possibly in a chloroplast respiratory chain. The immediate electron acceptor for the enzyme in this species is believed to be plastoquinone. Couples the redox reaction to proton translocation, and thus conserves the redox energy in a proton gradient. The protein is NAD(P)H-quinone oxidoreductase subunit H, chloroplastic (ndhH) of Secale cereale (Rye).